Reading from the N-terminus, the 226-residue chain is Uracil-DNA glycosylase (226 aa).

Catalysis depends on Asp-64, which acts as the Proton acceptor.

It belongs to the uracil-DNA glycosylase (UDG) superfamily. UNG family.

The protein localises to the cytoplasm. It carries out the reaction Hydrolyzes single-stranded DNA or mismatched double-stranded DNA and polynucleotides, releasing free uracil.. Its function is as follows. Excises uracil residues from the DNA which can arise as a result of misincorporation of dUMP residues by DNA polymerase or due to deamination of cytosine. In Photorhabdus laumondii subsp. laumondii (strain DSM 15139 / CIP 105565 / TT01) (Photorhabdus luminescens subsp. laumondii), this protein is Uracil-DNA glycosylase.